A 273-amino-acid chain; its full sequence is Flagellin FljN (273 aa).

The protein belongs to the bacterial flagellin family. In terms of assembly, in C.crescentus, the flagellar filament is composed of multiple flagellins of 29 kDa; 27 kDa and 25 kDa.

The protein localises to the secreted. It is found in the bacterial flagellum. Flagellin is the subunit protein which polymerizes to form the filaments of bacterial flagella. This chain is Flagellin FljN (fljN), found in Caulobacter vibrioides (strain ATCC 19089 / CIP 103742 / CB 15) (Caulobacter crescentus).